The following is a 391-amino-acid chain: ATP phosphoribosyltransferase regulatory subunit (391 aa).

It belongs to the class-II aminoacyl-tRNA synthetase family. HisZ subfamily. In terms of assembly, heteromultimer composed of HisG and HisZ subunits.

Its subcellular location is the cytoplasm. The protein operates within amino-acid biosynthesis; L-histidine biosynthesis; L-histidine from 5-phospho-alpha-D-ribose 1-diphosphate: step 1/9. Its function is as follows. Required for the first step of histidine biosynthesis. May allow the feedback regulation of ATP phosphoribosyltransferase activity by histidine. The chain is ATP phosphoribosyltransferase regulatory subunit from Bacillus licheniformis (strain ATCC 14580 / DSM 13 / JCM 2505 / CCUG 7422 / NBRC 12200 / NCIMB 9375 / NCTC 10341 / NRRL NRS-1264 / Gibson 46).